Consider the following 404-residue polypeptide: Cysteine desulfurase IscS (404 aa).

Pyridoxal 5'-phosphate is bound by residues 75-76 (AT), N155, Q183, and 203-205 (SAH). At K206 the chain carries N6-(pyridoxal phosphate)lysine. Pyridoxal 5'-phosphate is bound at residue T243. Residue C328 is the Cysteine persulfide intermediate of the active site. C328 is a binding site for [2Fe-2S] cluster.

This sequence belongs to the class-V pyridoxal-phosphate-dependent aminotransferase family. NifS/IscS subfamily. As to quaternary structure, homodimer. Forms a heterotetramer with IscU, interacts with other sulfur acceptors. Pyridoxal 5'-phosphate is required as a cofactor.

It localises to the cytoplasm. The enzyme catalyses (sulfur carrier)-H + L-cysteine = (sulfur carrier)-SH + L-alanine. It participates in cofactor biosynthesis; iron-sulfur cluster biosynthesis. Its function is as follows. Master enzyme that delivers sulfur to a number of partners involved in Fe-S cluster assembly, tRNA modification or cofactor biosynthesis. Catalyzes the removal of elemental sulfur atoms from cysteine to produce alanine. Functions as a sulfur delivery protein for Fe-S cluster synthesis onto IscU, an Fe-S scaffold assembly protein, as well as other S acceptor proteins. The protein is Cysteine desulfurase IscS of Shewanella sediminis (strain HAW-EB3).